Consider the following 471-residue polypeptide: Tumor necrosis factor receptor superfamily member 1A (471 aa).

Positions 1-29 are cleaved as a signal peptide; that stretch reads MGLPTVPGLLLPLVLPALLADVYPAGVQG. Residues 30 to 210 lie on the Extracellular side of the membrane; sequence LVPHPGDLEK…GKDSQDPGTT (181 aa). 4 TNFR-Cys repeats span residues 43 to 82, 83 to 125, 126 to 166, and 167 to 195; these read PCPQ…TDCR, VCAP…DTVC, GCRK…DTIC, and HCHM…KLCP. 7 disulfide bridges follow: cysteine 44/cysteine 58, cysteine 59/cysteine 72, cysteine 62/cysteine 81, cysteine 84/cysteine 99, cysteine 102/cysteine 117, cysteine 105/cysteine 125, and cysteine 127/cysteine 143. Asparagine 54 carries an N-linked (GlcNAc...) asparagine glycan. 2 N-linked (GlcNAc...) asparagine glycosylation sites follow: asparagine 145 and asparagine 151. 5 cysteine pairs are disulfide-bonded: cysteine 146–cysteine 158, cysteine 149–cysteine 166, cysteine 168–cysteine 179, cysteine 182–cysteine 194, and cysteine 185–cysteine 190. Residues 211-233 traverse the membrane as a helical segment; the sequence is VLLPLVIVFGLCLASFASVVLAC. Over 234–471 the chain is Cytoplasmic; it reads RYQRWKPKLY…RLASEPRLLW (238 aa). The N-SMase activation domain (NSD) stretch occupies residues 340-360; sequence TPGPPASTHLCTPVQKWEASA. A Death domain is found at 372–457; sequence PATLYAVVDG…GCLENIEEAL (86 aa).

In terms of assembly, binding of TNF to the extracellular domain leads to homotrimerization. The aggregated death domains provide a novel molecular interface that interacts specifically with the death domain of TRADD. Various TRADD-interacting proteins such as TRAFS, RIPK1 and possibly FADD, are recruited to the complex by their association with TRADD. This complex activates at least two distinct signaling cascades, apoptosis and NF-kappa-B signaling. Interacts with BAG4, BABAM2, FEM1B, GRB2, SQSTM1 and TRPC4AP. Interacts directly with NOL3 (via CARD domain); inhibits TNF-signaling pathway. Interacts with SH3RF2, TRADD and RIPK1. SH3RF2 facilitates the recruitment of RIPK1 and TRADD to TNFRSF1A in a TNF-alpha-dependent process. Interacts with PGLYRP1; this interaction is important for cell death induction. Interacts (via death domain) with MADD (via death domain).

The protein localises to the cell membrane. Its subcellular location is the golgi apparatus membrane. In terms of biological role, receptor for TNFSF2/TNF-alpha and homotrimeric TNFSF1/lymphotoxin-alpha. The adapter molecule FADD recruits caspase-8 to the activated receptor. The resulting death-inducing signaling complex (DISC) performs caspase-8 proteolytic activation which initiates the subsequent cascade of caspases (aspartate-specific cysteine proteases) mediating apoptosis. The chain is Tumor necrosis factor receptor superfamily member 1A (TNFRSF1A) from Bos taurus (Bovine).